The chain runs to 1407 residues: DNA-directed RNA polymerase subunit beta' (1407 aa).

4 residues coordinate Zn(2+): Cys-70, Cys-72, Cys-85, and Cys-88. Mg(2+) contacts are provided by Asp-460, Asp-462, and Asp-464. Cys-814, Cys-888, Cys-895, and Cys-898 together coordinate Zn(2+).

It belongs to the RNA polymerase beta' chain family. In terms of assembly, the RNAP catalytic core consists of 2 alpha, 1 beta, 1 beta' and 1 omega subunit. When a sigma factor is associated with the core the holoenzyme is formed, which can initiate transcription. The cofactor is Mg(2+). Requires Zn(2+) as cofactor.

It catalyses the reaction RNA(n) + a ribonucleoside 5'-triphosphate = RNA(n+1) + diphosphate. Its function is as follows. DNA-dependent RNA polymerase catalyzes the transcription of DNA into RNA using the four ribonucleoside triphosphates as substrates. This chain is DNA-directed RNA polymerase subunit beta', found in Pectobacterium atrosepticum (strain SCRI 1043 / ATCC BAA-672) (Erwinia carotovora subsp. atroseptica).